Consider the following 546-residue polypeptide: T-complex protein 1 subunit epsilon (546 aa).

This sequence belongs to the TCP-1 chaperonin family. Heterooligomeric complex of about 850 to 900 kDa that forms two stacked rings, 12 to 16 nm in diameter.

The protein resides in the cytoplasm. Molecular chaperone; assists the folding of proteins upon ATP hydrolysis. Known to play a role, in vitro, in the folding of actin and tubulin. The protein is T-complex protein 1 subunit epsilon (cct5) of Schizosaccharomyces pombe (strain 972 / ATCC 24843) (Fission yeast).